Reading from the N-terminus, the 112-residue chain is MASPNGGDDFESSLLSFEKLDRASPDLWPEQLPGVVEFAASCKNPITDSPPKWMAELESEDYEMLKELGSLTTANLMEKVRGLQNLAYQLGLEESREMTRGKFLNILESFKK.

This sequence belongs to the lin-52 family. Component of the DREAM complex.

The sequence is that of Protein lin-52 homolog (lin52) from Tetraodon nigroviridis (Spotted green pufferfish).